The primary structure comprises 338 residues: Ketol-acid reductoisomerase (NADP(+)) (338 aa).

Residues 1–181 enclose the KARI N-terminal Rossmann domain; the sequence is MRVYYDKDCD…GGGRSGIIET (181 aa). NADP(+) contacts are provided by residues 24-27, R47, S50, S52, and 82-85; these read YGSQ and DENQ. The active site involves H107. G133 serves as a coordination point for NADP(+). The 146-residue stretch at 182–327 folds into the KARI C-terminal knotted domain; the sequence is TFKDETETDL…EKLRGMMPWI (146 aa). Positions 190, 194, 226, and 230 each coordinate Mg(2+). S251 provides a ligand contact to substrate.

The protein belongs to the ketol-acid reductoisomerase family. Requires Mg(2+) as cofactor.

The catalysed reaction is (2R)-2,3-dihydroxy-3-methylbutanoate + NADP(+) = (2S)-2-acetolactate + NADPH + H(+). It carries out the reaction (2R,3R)-2,3-dihydroxy-3-methylpentanoate + NADP(+) = (S)-2-ethyl-2-hydroxy-3-oxobutanoate + NADPH + H(+). The protein operates within amino-acid biosynthesis; L-isoleucine biosynthesis; L-isoleucine from 2-oxobutanoate: step 2/4. Its pathway is amino-acid biosynthesis; L-valine biosynthesis; L-valine from pyruvate: step 2/4. Involved in the biosynthesis of branched-chain amino acids (BCAA). Catalyzes an alkyl-migration followed by a ketol-acid reduction of (S)-2-acetolactate (S2AL) to yield (R)-2,3-dihydroxy-isovalerate. In the isomerase reaction, S2AL is rearranged via a Mg-dependent methyl migration to produce 3-hydroxy-3-methyl-2-ketobutyrate (HMKB). In the reductase reaction, this 2-ketoacid undergoes a metal-dependent reduction by NADPH to yield (R)-2,3-dihydroxy-isovalerate. This is Ketol-acid reductoisomerase (NADP(+)) from Chromohalobacter salexigens (strain ATCC BAA-138 / DSM 3043 / CIP 106854 / NCIMB 13768 / 1H11).